The chain runs to 605 residues: DNA primase (605 aa).

Residues 37-61 (CPFHADKNPSMHINPIKGFYHCFAC) form a CHC2-type zinc finger. Residues 248 to 329 (KEIIVCEGYM…DGKVAILQGG (82 aa)) enclose the Toprim domain. Positions 254, 298, and 300 each coordinate Mg(2+).

The protein belongs to the DnaG primase family. In terms of assembly, monomer. Interacts with DnaB. It depends on Zn(2+) as a cofactor. The cofactor is Mg(2+).

The enzyme catalyses ssDNA + n NTP = ssDNA/pppN(pN)n-1 hybrid + (n-1) diphosphate.. Functionally, RNA polymerase that catalyzes the synthesis of short RNA molecules used as primers for DNA polymerase during DNA replication. The chain is DNA primase from Campylobacter jejuni subsp. jejuni serotype O:2 (strain ATCC 700819 / NCTC 11168).